Reading from the N-terminus, the 509-residue chain is Zinc finger CCCH-type with G patch domain-containing protein (509 aa).

The tract at residues 41–61 (TRGSEPEATSDTKTPETSDNI) is disordered. A compositionally biased stretch (polar residues) spans 47-58 (EATSDTKTPETS). The segment at 155-178 (PCNYFLEGECRFDEVRCRYSHGAL) adopts a C3H1-type zinc-finger fold. Positions 254–278 (DDDLTSESEESNETDGSDAGNDSDM) are disordered. One can recognise a G-patch domain in the interval 310 to 356 (TRGIGSKLMANMGYIHGTGLGSDGRGIVTPVSAQILPQGRSLDACME). The tract at residues 410-433 (GSQQTENANKKTKPNNLQQHSNKT) is disordered. Polar residues predominate over residues 423–433 (PNNLQQHSNKT).

Its subcellular location is the nucleus. In terms of biological role, transcription repressor. This chain is Zinc finger CCCH-type with G patch domain-containing protein, found in Drosophila mojavensis (Fruit fly).